We begin with the raw amino-acid sequence, 134 residues long: MATTFSASVSTLATSLATPTRISFQKPALVSRTNLSFNLRRSIPTRLSVSCAAKPETIEKVSKIVKKQLSLKDDQKVVAETKFADLGADSLDTVEIVMGLEEEFDIEMAEEKAQKIATVEEAAELIEELVLLKK.

A chloroplast-targeting transit peptide spans 1–51; the sequence is MATTFSASVSTLATSLATPTRISFQKPALVSRTNLSFNLRRSIPTRLSVSC. In terms of domain architecture, Carrier spans 55-130; that stretch reads PETIEKVSKI…EAAELIEELV (76 aa). Ser90 is subject to O-(pantetheine 4'-phosphoryl)serine.

The protein belongs to the acyl carrier protein (ACP) family. Post-translationally, 4'-phosphopantetheine is transferred from CoA to a specific serine of apo-ACP by acpS. This modification is essential for activity because fatty acids are bound in thioester linkage to the sulfhydryl of the prosthetic group. In terms of tissue distribution, seed.

The protein resides in the plastid. Its subcellular location is the chloroplast. The protein operates within lipid metabolism; fatty acid biosynthesis. Carrier of the growing fatty acid chain in fatty acid biosynthesis. This Brassica napus (Rape) protein is Acyl carrier protein, chloroplastic (ACL1.A3).